Consider the following 235-residue polypeptide: Ribonuclease 3 (235 aa).

Residues 11–137 (RAWCAEALGY…VVGALYLDGG (127 aa)) enclose the RNase III domain. Glu-51 is a Mg(2+) binding site. Residue Asp-55 is part of the active site. Mg(2+) contacts are provided by Asp-123 and Glu-126. Glu-126 is a catalytic residue. One can recognise a DRBM domain in the interval 164–233 (DYKTQLQEQL…ARQALMPEHH (70 aa)).

It belongs to the ribonuclease III family. Homodimer. Mg(2+) is required as a cofactor.

The protein resides in the cytoplasm. It catalyses the reaction Endonucleolytic cleavage to 5'-phosphomonoester.. Digests double-stranded RNA. Involved in the processing of primary rRNA transcript to yield the immediate precursors to the large and small rRNAs (23S and 16S). Processes some mRNAs, and tRNAs when they are encoded in the rRNA operon. Processes pre-crRNA and tracrRNA of type II CRISPR loci if present in the organism. This is Ribonuclease 3 from Symbiobacterium thermophilum (strain DSM 24528 / JCM 14929 / IAM 14863 / T).